An 885-amino-acid chain; its full sequence is MSSLFQPRPVLSSQRYSQSPDYVDTRRSIHNGRLPLRESTGNAQSHSFNGLVSCYQNQVALAPSMQTTIPAPMVPSQSLDCLYRVPTPRQQARFQRRPKTSVNPLYFWPAFRQYRNRQAHKDTQKDKGGVWRRPELEDAFVDSVLLMPHMGRRKFSMGGKLHGRNMLISEYIFVICIALLGSKEIFRIDNSNESIEQMGRKQVSSHMQVVKKFFEDLRCFHFLFPSEEKKEPGSTNSDDCYDEEEQESFKSNPVLTALAEGRVPDVKPNYEYFSQLLALQSSICTRPKTCEIFVSSSDIKIRDDVAYDVHDTPLDQASFPHLNKYTNCDDSPNVLGKDVLLHEYTRSLDRTTSACAKSVTRRWQHDAPAMYETLELPSRDEECLLLEMCATLELHEHAKFPSGSELTGFVEVAITQPALQNHRWKCITRLTRPAELHSDEGKHGVYTNDSGIHRRGCSDSKAECECHTRPRQDIHVPFPAVEWASILSMAVQYPDVEHQRLKEKRRKYADGDGKKELERAGSKRKRSEDEGDAASWTRREPTGSDLICKVAMYQELWSCAPDSTQWTRQAIIFWRFNTTNQWHKYNPVFKPAGTTWRWLTINDPMSRYHQQKALVYPTANVSRDALMSPTPTIHQHLTAAMNETFNSWDQGSSAPHVPHVPPLQTPNNSIGLFDSFSNGLATPPPTATLPPAYPTGNFDSRSGSFDARSASFDTRSGSFDGNLGPNNGVAFLPTTGPPPQHERQPTALGNNNQPFFDGQQSFSEVKPINTAVNSYMTASTSLELPNQLVYDNSGVDTSNMQGWDMSALDGWSAAASAPGSATAEWGPNTKVESHAGDHHGAMWAPPHWPLSAGAAPSSHERGASPRPLKRRRETMDVHVPVTAGW.

The span at 1-20 (MSSLFQPRPVLSSQRYSQSP) shows a compositional bias: polar residues. The segment at 1-25 (MSSLFQPRPVLSSQRYSQSPDYVDT) is disordered. The segment at residues 124-217 (QKDKGGVWRR…QVVKKFFEDL (94 aa)) is a DNA-binding region (TEA). Disordered regions lie at residues 502 to 539 (KEKRRKYADGDGKKELERAGSKRKRSEDEGDAASWTRR) and 817 to 885 (APGS…TAGW). Composition is skewed to basic and acidic residues over residues 508–521 (YADGDGKKELERAG) and 831–840 (VESHAGDHHG).

The protein belongs to the TEC1 family.

The protein resides in the nucleus. Its function is as follows. BrlA, abaA and wetA are pivotal regulators of conidiophore development and conidium maturation. They act individually and together to regulate their own expression and that of numerous other sporulation-specific genes. BrlA, abaA and wetA act together to positively regulate the expression of the Pks1 gene cluster that mediates the biosynthesis of an anthraquinone derivative pigment that contributes to conidial pigmentation that provides protection from UV radiation, heat and cold stress. In Metarhizium robertsii (strain ARSEF 23 / ATCC MYA-3075) (Metarhizium anisopliae (strain ARSEF 23)), this protein is Conidiophore development regulator abaA.